Consider the following 425-residue polypeptide: Histidine--tRNA ligase (425 aa).

It belongs to the class-II aminoacyl-tRNA synthetase family. As to quaternary structure, homodimer.

It localises to the cytoplasm. It carries out the reaction tRNA(His) + L-histidine + ATP = L-histidyl-tRNA(His) + AMP + diphosphate + H(+). This chain is Histidine--tRNA ligase, found in Aeromonas hydrophila subsp. hydrophila (strain ATCC 7966 / DSM 30187 / BCRC 13018 / CCUG 14551 / JCM 1027 / KCTC 2358 / NCIMB 9240 / NCTC 8049).